The chain runs to 436 residues: Gamma-glutamyl phosphate reductase (436 aa).

The protein belongs to the gamma-glutamyl phosphate reductase family.

It is found in the cytoplasm. The enzyme catalyses L-glutamate 5-semialdehyde + phosphate + NADP(+) = L-glutamyl 5-phosphate + NADPH + H(+). It participates in amino-acid biosynthesis; L-proline biosynthesis; L-glutamate 5-semialdehyde from L-glutamate: step 2/2. In terms of biological role, catalyzes the NADPH-dependent reduction of L-glutamate 5-phosphate into L-glutamate 5-semialdehyde and phosphate. The product spontaneously undergoes cyclization to form 1-pyrroline-5-carboxylate. In Prochlorococcus marinus (strain MIT 9215), this protein is Gamma-glutamyl phosphate reductase.